The primary structure comprises 390 residues: Uroporphyrinogen decarboxylase 2, chloroplastic (390 aa).

The N-terminal 30 residues, 1-30 (MATACPPLSLQPAYLSGRSARARRPPPAVR), are a transit peptide targeting the chloroplast. Substrate contacts are provided by residues 70 to 74 (RQAGR), Phe-89, Ser-119, Asp-120, Tyr-197, Ser-252, and His-367.

Belongs to the uroporphyrinogen decarboxylase family. As to quaternary structure, homodimer.

Its subcellular location is the plastid. It is found in the chloroplast. It catalyses the reaction uroporphyrinogen III + 4 H(+) = coproporphyrinogen III + 4 CO2. The protein operates within porphyrin-containing compound metabolism; protoporphyrin-IX biosynthesis; coproporphyrinogen-III from 5-aminolevulinate: step 4/4. Functionally, catalyzes the decarboxylation of four acetate groups of uroporphyrinogen-III to yield coproporphyrinogen-III. In Oryza sativa subsp. japonica (Rice), this protein is Uroporphyrinogen decarboxylase 2, chloroplastic.